We begin with the raw amino-acid sequence, 301 residues long: Glycine--tRNA ligase alpha subunit (301 aa).

It belongs to the class-II aminoacyl-tRNA synthetase family. As to quaternary structure, tetramer of two alpha and two beta subunits.

The protein localises to the cytoplasm. It catalyses the reaction tRNA(Gly) + glycine + ATP = glycyl-tRNA(Gly) + AMP + diphosphate. The protein is Glycine--tRNA ligase alpha subunit of Shewanella frigidimarina (strain NCIMB 400).